The chain runs to 243 residues: Uridine-cytidine kinase B (243 aa).

An ATP-binding site is contributed by 22 to 29 (GGTASGKT).

This sequence belongs to the uridine kinase family.

It carries out the reaction uridine + ATP = UMP + ADP + H(+). The catalysed reaction is cytidine + ATP = CMP + ADP + H(+). It participates in pyrimidine metabolism; CTP biosynthesis via salvage pathway; CTP from cytidine: step 1/3. Its pathway is pyrimidine metabolism; UMP biosynthesis via salvage pathway; UMP from uridine: step 1/1. Catalyzes the conversion of uridine into uridine monophosphate and cytidine into cytidine monophosphate in the pyrimidine salvage pathway. This is Uridine-cytidine kinase B (udkB) from Dictyostelium discoideum (Social amoeba).